A 293-amino-acid chain; its full sequence is 33 kDa chaperonin (293 aa).

2 cysteine pairs are disulfide-bonded: cysteine 238–cysteine 240 and cysteine 271–cysteine 274.

It belongs to the HSP33 family. Under oxidizing conditions two disulfide bonds are formed involving the reactive cysteines. Under reducing conditions zinc is bound to the reactive cysteines and the protein is inactive.

The protein localises to the cytoplasm. Redox regulated molecular chaperone. Protects both thermally unfolding and oxidatively damaged proteins from irreversible aggregation. Plays an important role in the bacterial defense system toward oxidative stress. This chain is 33 kDa chaperonin, found in Staphylococcus epidermidis (strain ATCC 35984 / DSM 28319 / BCRC 17069 / CCUG 31568 / BM 3577 / RP62A).